A 461-amino-acid chain; its full sequence is Probable tubulin polyglutamylase TTLL9 (461 aa).

Residues 1–21 (MSRPKNQNYKGHGLQKGKERE) are disordered. Residues 22–402 (QRASIRFKTT…EARLTGREKR (381 aa)) enclose the TTL domain. ATP contacts are provided by residues Lys149 and 155-156 (QG). Gln155 lines the a protein pocket. The interval 182 to 208 (SLEAQPARNTVNPSGSHDTRSSDDQKD) is disordered. Residues 188 to 197 (ARNTVNPSGS) show a composition bias toward polar residues. The span at 198-208 (HDTRSSDDQKD) shows a compositional bias: basic and acidic residues. ATP contacts are provided by residues 218 to 221 (QRYI) and 231 to 233 (KFD). Residue Arg257 participates in L-glutamate binding. 276 to 277 (TN) lines the ATP pocket. Position 294 (Lys294) interacts with L-glutamate. Asp348, Glu361, and Asn363 together coordinate Mg(2+). Lys379 lines the L-glutamate pocket.

Belongs to the tubulin--tyrosine ligase family. Mg(2+) serves as cofactor.

Its subcellular location is the cytoplasm. It is found in the cytoskeleton. The protein localises to the cilium basal body. It localises to the flagellum axoneme. It carries out the reaction (L-glutamyl)(n)-gamma-L-glutamyl-L-glutamyl-[protein] + L-glutamate + ATP = (L-glutamyl)(n+1)-gamma-L-glutamyl-L-glutamyl-[protein] + ADP + phosphate + H(+). Its function is as follows. Probable tubulin polyglutamylase that generates side chains of glutamate on the gamma-carboxyl group of specific glutamate residues within the C-terminal tail of target proteins. Similar to TTLL1, may acquire enzymatic activity only in complex with other proteins as it is most likely lacking domains important for autonomous activity. Mediates tubulin polyglutamylation which induces establishment of microtubule heterogeneity in sperm flagella, thereby playing a role in normal motile flagella axoneme structure and sperm flagella beating pattern. The chain is Probable tubulin polyglutamylase TTLL9 (TTLL9) from Bos taurus (Bovine).